A 265-amino-acid polypeptide reads, in one-letter code: Ubiquinone biosynthesis protein COQ4 homolog, mitochondrial (265 aa).

A mitochondrion-targeting transit peptide spans 1-30 (MATLLRPVLRRLCGLPGLQRPAAEMPLRAR). Ser-108 carries the phosphoserine modification. Zn(2+)-binding residues include His-163, Asp-164, His-167, and Glu-179.

The protein belongs to the COQ4 family. Component of a multi-subunit COQ enzyme complex, composed of at least COQ3, COQ4, COQ5, COQ6, COQ7 and COQ9. Zn(2+) serves as cofactor. In terms of tissue distribution, expressed ubiquitously, but at high levels in liver, lung and pancreas.

It localises to the mitochondrion inner membrane. It carries out the reaction 4-hydroxy-3-methoxy-5-(all-trans-decaprenyl)benzoate + H(+) = 2-methoxy-6-(all-trans-decaprenyl)phenol + CO2. It participates in cofactor biosynthesis; ubiquinone biosynthesis. Lyase that catalyzes the C1-decarboxylation of 4-hydroxy-3-methoxy-5-(all-trans-decaprenyl)benzoic acid into 2-methoxy-6-(all-trans-decaprenyl)phenol during ubiquinone biosynthesis. In Homo sapiens (Human), this protein is Ubiquinone biosynthesis protein COQ4 homolog, mitochondrial.